The primary structure comprises 337 residues: Casein kinase I isoform alpha (337 aa).

Residues Tyr17–Phe285 enclose the Protein kinase domain. ATP-binding positions include Ile23 to Ile31 and Lys46. Asp136 functions as the Proton acceptor in the catalytic mechanism. The segment covering Ala309–Lys325 has biased composition (low complexity). Positions Ala309–Phe337 are disordered.

This sequence belongs to the protein kinase superfamily. CK1 Ser/Thr protein kinase family. Casein kinase I subfamily. Autophosphorylated.

The protein resides in the cytoplasm. It localises to the cytoskeleton. The protein localises to the microtubule organizing center. Its subcellular location is the centrosome. It is found in the chromosome. The protein resides in the centromere. It localises to the kinetochore. The protein localises to the nucleus speckle. Its subcellular location is the cilium basal body. It is found in the spindle. The catalysed reaction is L-seryl-[protein] + ATP = O-phospho-L-seryl-[protein] + ADP + H(+). It carries out the reaction L-threonyl-[protein] + ATP = O-phospho-L-threonyl-[protein] + ADP + H(+). Functionally, casein kinases are operationally defined by their preferential utilization of acidic proteins such as caseins as substrates. It can phosphorylate a large number of proteins. Participates in Wnt signaling. May play a role in segregating chromosomes during mitosis. May play a role in keratin cytoskeleton disassembly. The polypeptide is Casein kinase I isoform alpha (CSNK1A1) (Gallus gallus (Chicken)).